A 299-amino-acid chain; its full sequence is Oxygen-dependent coproporphyrinogen-III oxidase (299 aa).

Position 92 (S92) interacts with substrate. Positions 96 and 106 each coordinate a divalent metal cation. The Proton donor role is filled by H106. Residue 108-110 (NVR) coordinates substrate. Residues H145 and H175 each contribute to the a divalent metal cation site. Residues 240–275 (YVEFNLVWDRGTLFGLQTGGRTESILMSMPPLVRWE) form an important for dimerization region. A substrate-binding site is contributed by 258-260 (GGR).

This sequence belongs to the aerobic coproporphyrinogen-III oxidase family. In terms of assembly, homodimer. A divalent metal cation serves as cofactor.

The protein resides in the cytoplasm. It catalyses the reaction coproporphyrinogen III + O2 + 2 H(+) = protoporphyrinogen IX + 2 CO2 + 2 H2O. It functions in the pathway porphyrin-containing compound metabolism; protoporphyrin-IX biosynthesis; protoporphyrinogen-IX from coproporphyrinogen-III (O2 route): step 1/1. Its function is as follows. Involved in the heme biosynthesis. Catalyzes the aerobic oxidative decarboxylation of propionate groups of rings A and B of coproporphyrinogen-III to yield the vinyl groups in protoporphyrinogen-IX. In Shigella flexneri, this protein is Oxygen-dependent coproporphyrinogen-III oxidase.